We begin with the raw amino-acid sequence, 211 residues long: 2,3-bisphosphoglycerate-dependent phosphoglycerate mutase (211 aa).

Residues 9 to 16, 22 to 23, R61, 88 to 91, K99, 115 to 116, and 159 to 160 each bind substrate; these read RHGQSDWN, TG, ERDY, RR, and GN. H10 serves as the catalytic Tele-phosphohistidine intermediate. Residue E88 is the Proton donor/acceptor of the active site.

Belongs to the phosphoglycerate mutase family. BPG-dependent PGAM subfamily. In terms of assembly, homodimer.

The catalysed reaction is (2R)-2-phosphoglycerate = (2R)-3-phosphoglycerate. The protein operates within carbohydrate degradation; glycolysis; pyruvate from D-glyceraldehyde 3-phosphate: step 3/5. In terms of biological role, catalyzes the interconversion of 2-phosphoglycerate and 3-phosphoglycerate. The sequence is that of 2,3-bisphosphoglycerate-dependent phosphoglycerate mutase from Allorhizobium ampelinum (strain ATCC BAA-846 / DSM 112012 / S4) (Agrobacterium vitis (strain S4)).